We begin with the raw amino-acid sequence, 174 residues long: Large ribosomal subunit protein uL10 (174 aa).

Belongs to the universal ribosomal protein uL10 family. In terms of assembly, part of the ribosomal stalk of the 50S ribosomal subunit. The N-terminus interacts with L11 and the large rRNA to form the base of the stalk. The C-terminus forms an elongated spine to which L12 dimers bind in a sequential fashion forming a multimeric L10(L12)X complex.

In terms of biological role, forms part of the ribosomal stalk, playing a central role in the interaction of the ribosome with GTP-bound translation factors. The polypeptide is Large ribosomal subunit protein uL10 (Desulfovibrio desulfuricans (strain ATCC 27774 / DSM 6949 / MB)).